We begin with the raw amino-acid sequence, 153 residues long: UPF0756 membrane protein BA_4840/GBAA_4840/BAS4489 (153 aa).

The next 4 helical transmembrane spans lie at 8 to 28 (FLFILLIIGLIAKNQSLTVAI), 54 to 74 (LGVTVITIAVLVPIATGEIGF), 87 to 107 (WIALASGVAVALLAKGGVQLL), and 117 to 137 (LVFGTIIAVALFNGVAVGPLI).

Belongs to the UPF0756 family.

It localises to the cell membrane. In Bacillus anthracis, this protein is UPF0756 membrane protein BA_4840/GBAA_4840/BAS4489.